The primary structure comprises 508 residues: Maturase K (508 aa).

Belongs to the intron maturase 2 family. MatK subfamily.

It is found in the plastid. It localises to the chloroplast. Usually encoded in the trnK tRNA gene intron. Probably assists in splicing its own and other chloroplast group II introns. The polypeptide is Maturase K (Antirrhinum majus (Garden snapdragon)).